An 86-amino-acid chain; its full sequence is Small ribosomal subunit protein bS18 (86 aa).

This sequence belongs to the bacterial ribosomal protein bS18 family. In terms of assembly, part of the 30S ribosomal subunit. Forms a tight heterodimer with protein bS6.

Its function is as follows. Binds as a heterodimer with protein bS6 to the central domain of the 16S rRNA, where it helps stabilize the platform of the 30S subunit. The chain is Small ribosomal subunit protein bS18 from Campylobacter concisus (strain 13826).